The following is a 66-amino-acid chain: Conotoxin Cal5.2 (66 aa).

A signal peptide spans 1 to 20 (MMYCLPVVCILLLLIPSSAT). A propeptide spanning residues 21-51 (FVVESRLEKDQAQSFTGDAWKRVSPIHEMIQ) is cleaved from the precursor. Val65 carries the post-translational modification Valine amide.

This sequence belongs to the conotoxin T superfamily. In terms of processing, contains 2 disulfide bonds that can be either 'C1-C3, C2-C4' or 'C1-C4, C2-C3', since these disulfide connectivities have been observed for conotoxins with cysteine framework V (for examples, see AC P0DQQ7 and AC P81755). In terms of tissue distribution, expressed by the venom duct.

It localises to the secreted. Its function is as follows. Probable neurotoxin with unknown target. Possibly targets ion channels. This chain is Conotoxin Cal5.2, found in Californiconus californicus (California cone).